Here is a 141-residue protein sequence, read N- to C-terminus: Putative pre-16S rRNA nuclease (141 aa).

Belongs to the YqgF nuclease family.

Its subcellular location is the cytoplasm. Could be a nuclease involved in processing of the 5'-end of pre-16S rRNA. In Shewanella oneidensis (strain ATCC 700550 / JCM 31522 / CIP 106686 / LMG 19005 / NCIMB 14063 / MR-1), this protein is Putative pre-16S rRNA nuclease.